The following is a 279-amino-acid chain: Cell death abnormality protein 2 (279 aa).

The region spanning 14–115 (FYFPGMSREE…EASLLAAYKK (102 aa)) is the SH2 domain. Positions 116-176 (PIIEVVVGTF…PANYVQIQME (61 aa)) constitute an SH3 1 domain. The disordered stretch occupies residues 181-213 (RTSKGASQSSIGSSGGGAERFSSASTSSDNIEL). A compositionally biased stretch (polar residues) spans 202–211 (SSASTSSDNI). One can recognise an SH3 2 domain in the interval 214–277 (QPRLPAKAKV…PHTYLRFTAV (64 aa)).

The protein belongs to the CRK family. In terms of assembly, interacts with ced-5 (via C-terminus which contains a candidate SH3-binding, proline-rich region). Forms a ternary complex with ced-5 and ced-12. Interacts (via SH2 domain) with src-1 (when activated and phosphorylated at 'Tyr-416').

Its function is as follows. Required for cell migration and engulfment of cell corpses but not for programmed cell death/apoptosis. Has a role in the migration of the 2 gonadal distal tip cells (DTCs). Plays a role in protecting dopaminergic neurons from oxidative stress-induced degeneration. The chain is Cell death abnormality protein 2 from Caenorhabditis elegans.